Here is a 137-residue protein sequence, read N- to C-terminus: Large ribosomal subunit protein uL16 (137 aa).

Basic residues predominate over residues 1–17 (MLSPKRTKFRKQQRGRM). A disordered region spans residues 1–24 (MLSPKRTKFRKQQRGRMRGNANSG).

It belongs to the universal ribosomal protein uL16 family. In terms of assembly, part of the 50S ribosomal subunit.

Functionally, binds 23S rRNA and is also seen to make contacts with the A and possibly P site tRNAs. The protein is Large ribosomal subunit protein uL16 of Trichodesmium erythraeum (strain IMS101).